Here is a 258-residue protein sequence, read N- to C-terminus: Indole-3-glycerol phosphate synthase (258 aa).

Belongs to the TrpC family.

The catalysed reaction is 1-(2-carboxyphenylamino)-1-deoxy-D-ribulose 5-phosphate + H(+) = (1S,2R)-1-C-(indol-3-yl)glycerol 3-phosphate + CO2 + H2O. The protein operates within amino-acid biosynthesis; L-tryptophan biosynthesis; L-tryptophan from chorismate: step 4/5. The chain is Indole-3-glycerol phosphate synthase from Geobacillus sp. (strain WCH70).